A 384-amino-acid chain; its full sequence is MSMSFSFQVEATQGAARAGRMITPHGEVETPVFMPVGTVATVKGIPQDLLEELGVQILLNNTYHLYLRPGVEQIRKLGGTHKFMSWDRSILTDSGGFQVFSLSELRKVTEEGVSFRSHLDGSSHLFSPESAMASQIGIGADIIMAFDECTEYPAERTRTERSMELTLRWAERSKNAFEAHKHEVPWFAERGKKSQALFGIVQGGMFPNLRKESAERTVEIGFPGYALGGFSVGEPREKTAELVANTVPLLPENKPRYLMGVGYPEEIVQYARMGIDMMDCVLPTRAARHGLLFTSEGRLTIKNQRFASDEGPLDPNCSCKVCKRYSRAYLRHLYASNEVLAQVLNTTHNLSYYLDTMRRVRQAIILGENSVSLPVVRSPHLSAT.

Catalysis depends on Asp-93, which acts as the Proton acceptor. Substrate-binding positions include 93-97 (DSGGF), Asp-147, Gln-202, and Gly-229. The segment at 260–266 (GVGYPEE) is RNA binding. Residue Asp-279 is the Nucleophile of the active site. An RNA binding; important for wobble base 34 recognition region spans residues 284–288 (TRAAR). Zn(2+)-binding residues include Cys-317, Cys-319, Cys-322, and His-348.

Belongs to the queuine tRNA-ribosyltransferase family. Homodimer. Within each dimer, one monomer is responsible for RNA recognition and catalysis, while the other monomer binds to the replacement base PreQ1. Zn(2+) is required as a cofactor.

It catalyses the reaction 7-aminomethyl-7-carbaguanine + guanosine(34) in tRNA = 7-aminomethyl-7-carbaguanosine(34) in tRNA + guanine. It participates in tRNA modification; tRNA-queuosine biosynthesis. In terms of biological role, catalyzes the base-exchange of a guanine (G) residue with the queuine precursor 7-aminomethyl-7-deazaguanine (PreQ1) at position 34 (anticodon wobble position) in tRNAs with GU(N) anticodons (tRNA-Asp, -Asn, -His and -Tyr). Catalysis occurs through a double-displacement mechanism. The nucleophile active site attacks the C1' of nucleotide 34 to detach the guanine base from the RNA, forming a covalent enzyme-RNA intermediate. The proton acceptor active site deprotonates the incoming PreQ1, allowing a nucleophilic attack on the C1' of the ribose to form the product. After dissociation, two additional enzymatic reactions on the tRNA convert PreQ1 to queuine (Q), resulting in the hypermodified nucleoside queuosine (7-(((4,5-cis-dihydroxy-2-cyclopenten-1-yl)amino)methyl)-7-deazaguanosine). This chain is Queuine tRNA-ribosyltransferase, found in Koribacter versatilis (strain Ellin345).